Consider the following 356-residue polypeptide: Probable D-xylulose reductase A (356 aa).

Residues cysteine 45, histidine 70, and glutamate 71 each contribute to the Zn(2+) site. 180-185 provides a ligand contact to NAD(+); it reads GAGPVG.

This sequence belongs to the zinc-containing alcohol dehydrogenase family. It depends on Zn(2+) as a cofactor.

The catalysed reaction is xylitol + NAD(+) = D-xylulose + NADH + H(+). It functions in the pathway carbohydrate degradation; L-arabinose degradation via L-arabinitol; D-xylulose 5-phosphate from L-arabinose (fungal route): step 4/5. Functionally, xylitol dehydrogenase which catalyzes the conversion of xylitol to D-xylulose. Xylose is a major component of hemicelluloses such as xylan. Most fungi utilize D-xylose via three enzymatic reactions, xylose reductase (XR), xylitol dehydrogenase (XDH), and xylulokinase, to form xylulose 5-phosphate, which enters pentose phosphate pathway. This is Probable D-xylulose reductase A (xdhA) from Arthroderma otae (strain ATCC MYA-4605 / CBS 113480) (Microsporum canis).